Consider the following 382-residue polypeptide: Galactokinase (382 aa).

Residue 34–37 (EHTD) coordinates substrate. 124 to 130 (GAGLSSS) serves as a coordination point for ATP. Positions 130 and 162 each coordinate Mg(2+). Aspartate 174 acts as the Proton acceptor in catalysis. Tyrosine 223 is a substrate binding site.

The protein belongs to the GHMP kinase family. GalK subfamily.

The protein localises to the cytoplasm. It catalyses the reaction alpha-D-galactose + ATP = alpha-D-galactose 1-phosphate + ADP + H(+). Its pathway is carbohydrate metabolism; galactose metabolism. Catalyzes the transfer of the gamma-phosphate of ATP to D-galactose to form alpha-D-galactose-1-phosphate (Gal-1-P). The chain is Galactokinase from Shigella boydii serotype 18 (strain CDC 3083-94 / BS512).